Consider the following 178-residue polypeptide: C-phycoerythrin class 2 subunit beta (178 aa).

Phycourobilin-binding residues include Cys-50 and Cys-61. 2 residues coordinate (2R,3E)-phycoerythrobilin: Cys-82 and Cys-159.

Belongs to the phycobiliprotein family. In terms of assembly, heterodimer of an alpha and a beta chain. Contains two covalently linked phycoerythrobilin chromophores and one covalently linked phycourobilin chromophore.

It localises to the cellular thylakoid membrane. In terms of biological role, light-harvesting photosynthetic bile pigment-protein from the phycobiliprotein complex. This chain is C-phycoerythrin class 2 subunit beta (mpeB), found in Synechococcus sp. (strain WH8103).